The primary structure comprises 115 residues: Large ribosomal subunit protein bL20c (115 aa).

This sequence belongs to the bacterial ribosomal protein bL20 family.

The protein resides in the plastid. Its subcellular location is the chloroplast. Its function is as follows. Binds directly to 23S ribosomal RNA and is necessary for the in vitro assembly process of the 50S ribosomal subunit. It is not involved in the protein synthesizing functions of that subunit. The chain is Large ribosomal subunit protein bL20c from Pyropia yezoensis (Susabi-nori).